We begin with the raw amino-acid sequence, 238 residues long: Glycerol-3-phosphate acyltransferase (238 aa).

The next 6 membrane-spanning stretches (helical) occupy residues 5 to 25, 61 to 81, 88 to 108, 125 to 145, 149 to 169, and 194 to 214; these read VIFGSNILLILVAYFIGSINF, FLVFFLDVSKSFWFAIISAIL, FGAVITQLVVLFVIIGHVFPI, IASLNIILAIIGGIIFFAMIF, IVSLGSFITPFILVIFMIIPW, and AWYLSSLFLFLAALIILFTHI.

The protein belongs to the PlsY family. Probably interacts with PlsX.

The protein localises to the cell membrane. It catalyses the reaction an acyl phosphate + sn-glycerol 3-phosphate = a 1-acyl-sn-glycero-3-phosphate + phosphate. The protein operates within lipid metabolism; phospholipid metabolism. Its function is as follows. Catalyzes the transfer of an acyl group from acyl-phosphate (acyl-PO(4)) to glycerol-3-phosphate (G3P) to form lysophosphatidic acid (LPA). This enzyme utilizes acyl-phosphate as fatty acyl donor, but not acyl-CoA or acyl-ACP. The sequence is that of Glycerol-3-phosphate acyltransferase from Mycoplasma mobile (strain ATCC 43663 / 163K / NCTC 11711) (Mesomycoplasma mobile).